The following is a 487-amino-acid chain: L-tartrate/succinate antiporter (487 aa).

The next 14 helical transmembrane spans lie at 10–30 (YLAPLAVIAIIALLPLPAGLE), 33–53 (TWLYFAVFTGVIVGLILEPVP), 54–74 (GAVVAMVGISIIAILSPWLLF), 93–113 (WAVSGFSNSVIWLIFAAFMFG), 137–157 (TLFLGYAVMFSELILAPVTPS), 189–209 (IGSYIMWMGIVADCVTSAIFL), 236–256 (FLGMLPLSILLVLLVPWLAYV), 292–312 (LMVGALVLWIFGGDYIDAAMV), 313–333 (GYSVVALMLLLRIICWDDIVS), 340–360 (VFFWLASLITLATGLNNTGFI), 370–390 (SLSGYSPTIVMVALIVVFYLL), 393–413 (FFASATAYTSALAPMMIAAAL), 418–438 (IPLPVFCLMVGAAIGLGSILT), and 462–482 (LGAIFGLIFLVLLVITGLLWM).

This sequence belongs to the SLC13A/DASS transporter (TC 2.A.47) family. DIT1 subfamily.

It is found in the cell inner membrane. The enzyme catalyses (2R,3R)-tartrate(out) + succinate(in) = (2R,3R)-tartrate(in) + succinate(out). Functionally, catalyzes the uptake of tartrate in exchange for intracellular succinate. Essential for anaerobic L-tartrate fermentation. The sequence is that of L-tartrate/succinate antiporter (ttdT) from Escherichia coli O6:H1 (strain CFT073 / ATCC 700928 / UPEC).